The sequence spans 1038 residues: Pentatricopeptide repeat-containing protein At5g27270 (1038 aa).

A compositionally biased stretch (low complexity) spans 23–38; it reads SRNSRISIKSSSSSSK. A disordered region spans residues 23–69; the sequence is SRNSRISIKSSSSSSKVRPDPWSLSDGNPEKPKPRYERPKHPLSDDD. Residues 50–69 are compositionally biased toward basic and acidic residues; it reads NPEKPKPRYERPKHPLSDDD. PPR repeat units lie at residues 187-221, 222-256, 257-291, 292-326, 327-361, 362-396, 397-431, 432-466, 467-501, 502-535, 536-570, 601-631, 634-668, 669-699, 703-737, 738-772, 773-807, 808-842, 843-877, 878-912, 913-947, 948-982, and 983-1017; these read SVVVYTIVLRLYGQVGKIKMAEETFLEMLEVGCEP, DAVACGTMLCTYARWGRHSAMLTFYKAVQERRILL, STSVYNFMLSSLQKKSFHGKVIDLWLEMVEEGVPP, NEFTYTLVVSSYAKQGFKEEALKAFGEMKSLGFVP, EEVTYSSVISLSVKAGDWEKAIGLYEDMRSQGIVP, SNYTCATMLSLYYKTENYPKALSLFADMERNKIPA, DEVIRGLIIRIYGKLGLFHDAQSMFEETERLNLLA, DEKTYLAMSQVHLNSGNVVKALDVIEMMKTRDIPL, SRFAYIVMLQCYAKIQNVDCAEEAFRALSKTGLPD, ASSCNDMLNLYTRLNLGEKAKGFIKQIMVDQVHF, DIELYKTAMRVYCKEGMVAEAQDLIVKMGREARVK, DVMALGLMLNLRLKEGNLNETKAILNLMFKT, GSSAVNRVISSFVREGDVSKAEMIADIIIRLGLRM, EEETIATLIAVYGRQHKLKEAKRLYLAAGES, GKSVIRSMIDAYVRCGWLEDAYGLFMESAEKGCDP, GAVTISILVNALTNRGKHREAEHISRTCLEKNIEL, DTVGYNTLIKAMLEAGKLQCASEIYERMHTSGVPC, SIQTYNTMISVYGRGLQLDKAIEIFSNARRSGLYL, DEKIYTNMIMHYGKGGKMSEALSLFSEMQKKGIKP, GTPSYNMMVKICATSRLHHEVDELLQAMERNGRCT, DLSTYLTLIQVYAESSQFAEAEKTITLVKEKGIPL, SHSHFSSLLSALVKAGMMEEAERTYCKMSEAGISP, and DSACKRTILKGYMTCGDAEKGILFYEKMIRSSVED.

This sequence belongs to the PPR family. P subfamily.

The chain is Pentatricopeptide repeat-containing protein At5g27270 (EMB976) from Arabidopsis thaliana (Mouse-ear cress).